Reading from the N-terminus, the 366-residue chain is Zinc-regulated GTPase metalloprotein activator 1 (366 aa).

A psi-PxLVp motif motif is present at residues 5 to 12 (DECPELVP). 31–38 (GYLGAGKT) is a GTP binding site. Zn(2+) contacts are provided by Cys89, Cys91, and Cys92. Positions 89-92 (CLCC) match the CXCC motif motif. GTP contacts are provided by residues 92-96 (CSVKD) and 185-188 (NKTD). Positions 258–357 (TITFEVPGSV…GEILKKEFIS (100 aa)) constitute a CobW C-terminal domain.

This sequence belongs to the SIMIBI class G3E GTPase family. ZNG1 subfamily.

It localises to the nucleus. It catalyses the reaction GTP + H2O = GDP + phosphate + H(+). In terms of biological role, zinc chaperone that directly transfers zinc cofactor to target metalloproteins, thereby activating them. Catalyzes zinc insertion into the active site of methionine aminopeptidase METAP1, which function to cleave the initiator methionine from polypeptides during or after protein translation. Mechanistically, the N-terminal psi-PxLVp motif binds to the C6H2-type zinc finger of inactive form of METAP1. After formation of the docked complex, zinc is transferred from the CXCC motif in the GTPase domain of ZNG1 to the zinc binding site in the peptidase domain of METAP1 in a process requiring GTP hydrolysis. GTP/GDP exchange is required for release of active METAP1. The polypeptide is Zinc-regulated GTPase metalloprotein activator 1 (Danio rerio (Zebrafish)).